The sequence spans 391 residues: Putative alpha-ketoglutarate-dependent sulfonate dioxygenase (391 aa).

The Fe cation site is built by H204 and D206. 2-oxoglutarate-binding residues include T231 and W338. H353 is a binding site for Fe cation. 2-oxoglutarate contacts are provided by R364 and R368.

This sequence belongs to the TfdA dioxygenase family. Fe(2+) serves as cofactor.

It participates in organosulfur degradation; alkanesulfonate degradation. Its function is as follows. Acts as an alpha-ketoglutarate-dependent dioxygenase active on sulfonates. This chain is Putative alpha-ketoglutarate-dependent sulfonate dioxygenase, found in Schizosaccharomyces pombe (strain 972 / ATCC 24843) (Fission yeast).